An 838-amino-acid polypeptide reads, in one-letter code: Urease (838 aa).

Positions 400–838 (GAIDCHVHFI…VPLSRNYFLF (439 aa)) constitute a Urease domain. Residues His-405, His-407, and Lys-488 each contribute to the Ni(2+) site. Lys-488 is subject to N6-carboxylysine. Residue His-490 coordinates substrate. The Ni(2+) site is built by His-517 and His-543. The active-site Proton donor is His-591. Asp-631 provides a ligand contact to Ni(2+).

The protein in the C-terminal section; belongs to the metallo-dependent hydrolases superfamily. Urease alpha subunit family. Homohexamer. Other oligomeric forms may exist depending on pH and presence of salts. Requires Ni(2+) as cofactor. Post-translationally, carboxylation allows a single lysine to coordinate two nickel ions.

The enzyme catalyses urea + 2 H2O + H(+) = hydrogencarbonate + 2 NH4(+). The protein operates within nitrogen metabolism; urea degradation; CO(2) and NH(3) from urea (urease route): step 1/1. With respect to regulation, requires the three urease accessory proteins URED, UREF AND UREG for its activation. Functionally, urea hydrolase involved in nitrogen recycling from ureide, purine, and arginine catabolism. The sequence is that of Urease from Arabidopsis thaliana (Mouse-ear cress).